The following is a 253-amino-acid chain: Probable transcriptional regulatory protein Krad_3057 (253 aa).

It belongs to the TACO1 family.

The protein resides in the cytoplasm. This Kineococcus radiotolerans (strain ATCC BAA-149 / DSM 14245 / SRS30216) protein is Probable transcriptional regulatory protein Krad_3057.